The primary structure comprises 161 residues: MSRTAIYPGTFDPLTNGHLDIVTRAAHMFDSVILAIAASPGKQPLFTLEERVAMAREVTAHLTNVEVHGFSELMAHFAQRQGANILVRGLRAVSDFEYELQLANMNRHLMPTLESVFLMPAEAWSFISSSLVKEVARHGGDVDAFLPEQVARALMTRLRDA.

Residue Thr-10 participates in substrate binding. ATP-binding positions include Thr-10–Phe-11 and His-18. The substrate site is built by Lys-42, Met-74, and Arg-88. ATP contacts are provided by residues Gly-89–Arg-91, Glu-99, and Trp-124–Ser-130.

It belongs to the bacterial CoaD family. Homohexamer. It depends on Mg(2+) as a cofactor.

Its subcellular location is the cytoplasm. The catalysed reaction is (R)-4'-phosphopantetheine + ATP + H(+) = 3'-dephospho-CoA + diphosphate. The protein operates within cofactor biosynthesis; coenzyme A biosynthesis; CoA from (R)-pantothenate: step 4/5. Its function is as follows. Reversibly transfers an adenylyl group from ATP to 4'-phosphopantetheine, yielding dephospho-CoA (dPCoA) and pyrophosphate. This chain is Phosphopantetheine adenylyltransferase, found in Edwardsiella ictaluri (strain 93-146).